The primary structure comprises 537 residues: Extracellular exo-inulinase inuE (537 aa).

A signal peptide spans M1–A19. D41 is a catalytic residue. N-linked (GlcNAc...) asparagine glycosylation is found at N49, N67, N112, N300, N363, N398, N430, and N531.

This sequence belongs to the glycosyl hydrolase 32 family.

The protein localises to the secreted. It catalyses the reaction Hydrolysis of terminal, non-reducing (2-&gt;1)- and (2-&gt;6)-linked beta-D-fructofuranose residues in fructans.. Exo-inulinase involved in utilization of the plant storage polymer inulin, consisting of fructooligosaccharides with a degree of polymerization (DP) value from 2 to 60. Splits off terminal fructose units successively from the non-reducing end of the inulin molecule, and also hydrolyze sucrose and raffinose. This is Extracellular exo-inulinase inuE (inuE) from Aspergillus niger (strain ATCC MYA-4892 / CBS 513.88 / FGSC A1513).